The chain runs to 271 residues: Type III pantothenate kinase (271 aa).

An ATP-binding site is contributed by 6-13 (DVRNTNIV). 109 to 112 (GADR) lines the substrate pocket. Residue D111 is the Proton acceptor of the active site. D131 provides a ligand contact to K(+). Residue T134 participates in ATP binding. T186 provides a ligand contact to substrate.

Belongs to the type III pantothenate kinase family. In terms of assembly, homodimer. NH4(+) serves as cofactor. K(+) is required as a cofactor.

The protein resides in the cytoplasm. The enzyme catalyses (R)-pantothenate + ATP = (R)-4'-phosphopantothenate + ADP + H(+). Its pathway is cofactor biosynthesis; coenzyme A biosynthesis; CoA from (R)-pantothenate: step 1/5. Its function is as follows. Catalyzes the phosphorylation of pantothenate (Pan), the first step in CoA biosynthesis. In Rhodococcus erythropolis (strain PR4 / NBRC 100887), this protein is Type III pantothenate kinase.